The sequence spans 355 residues: UDP-N-acetylglucosamine--N-acetylmuramyl-(pentapeptide) pyrophosphoryl-undecaprenol N-acetylglucosamine transferase (355 aa).

Residues Thr-13–Gly-15, Asn-125, Arg-162, Ser-190, Ile-244, and Gln-289 each bind UDP-N-acetyl-alpha-D-glucosamine.

This sequence belongs to the glycosyltransferase 28 family. MurG subfamily.

It localises to the cell inner membrane. The catalysed reaction is di-trans,octa-cis-undecaprenyl diphospho-N-acetyl-alpha-D-muramoyl-L-alanyl-D-glutamyl-meso-2,6-diaminopimeloyl-D-alanyl-D-alanine + UDP-N-acetyl-alpha-D-glucosamine = di-trans,octa-cis-undecaprenyl diphospho-[N-acetyl-alpha-D-glucosaminyl-(1-&gt;4)]-N-acetyl-alpha-D-muramoyl-L-alanyl-D-glutamyl-meso-2,6-diaminopimeloyl-D-alanyl-D-alanine + UDP + H(+). It participates in cell wall biogenesis; peptidoglycan biosynthesis. Its function is as follows. Cell wall formation. Catalyzes the transfer of a GlcNAc subunit on undecaprenyl-pyrophosphoryl-MurNAc-pentapeptide (lipid intermediate I) to form undecaprenyl-pyrophosphoryl-MurNAc-(pentapeptide)GlcNAc (lipid intermediate II). This Neisseria meningitidis serogroup A / serotype 4A (strain DSM 15465 / Z2491) protein is UDP-N-acetylglucosamine--N-acetylmuramyl-(pentapeptide) pyrophosphoryl-undecaprenol N-acetylglucosamine transferase.